Consider the following 772-residue polypeptide: MLSLKKYLTEGLLQFTILLSLIGVRVDVDTYLTSQLPPLREIILGPSSAYTQTQFHNLRNTLDGYGIHPKSIDLDNYFTARRLLSQVRALDRFQVPTTEVNAWLVHRDPEGSVSGSQPNSGLALESSSGLQDVTGPDNGVRESETEQGFGEDLEDLGAVAPPVSGDLTKEDIDLIDILWRQDIDLGAGREVFDYSHRQKEQDVEKELRDGGEQDTWAGEGAEALARNLLVDGETGESFPAQVPSGEDQTALSLEECLRLLEATCPFGENAEFPADISSITEAVPSESEPPALQNNLLSPLLTGTESPFDLEQQWQDLMSIMEMQAMEVNTSASEILYSAPPGDPLSTNYSLAPNTPINQNVSLHQASLGGCSQDFLLFSPEVESLPVASSSTLLPLAPSNSTSLNSTFGSTNLTGLFFPPQLNGTANDTAGPELPDPLGGLLDEAMLDEISLMDLAIEEGFNPVQASQLEEEFDSDSGLSLDSSHSPSSLSSSEGSSSSSSSSSSSSSSASSSASSSFSEEGAVGYSSDSETLDLEEAEGAVGYQPEYSKFCRMSYQDPAQLSCLPYLEHVGHNHTYNMAPSALDSADLPPPSALKKGSKEKQADFLDKQMSRDEHRARAMKIPFTNDKIINLPVEEFNELLSKYQLSEAQLSLIRDIRRRGKNKMAAQNCRKRKLDTILNLERDVEDLQRDKARLLREKVEFLRSLRQMKQKVQSLYQEVFGRLRDENGRPYSPSQYALQYAGDGSVLLIPRTMADQQARRQERKPKDRRK.

Residues 7–24 (YLTEGLLQFTILLSLIGV) traverse the membrane as a helical; Signal-anchor for type II membrane protein segment. The disordered stretch occupies residues 108–148 (DPEGSVSGSQPNSGLALESSSGLQDVTGPDNGVRESETEQG). The segment covering 113-131 (VSGSQPNSGLALESSSGLQ) has biased composition (polar residues). Residues 191-199 (VFDYSHRQK) form a cholesterol recognition/amino acid consensus (CRAC) region region. N-linked (GlcNAc...) asparagine glycans are attached at residues N348 and N360. The segment at 379–383 (SPEVE) is CPD. Residues N412 and N423 are each glycosylated (N-linked (GlcNAc...) asparagine). Disordered stretches follow at residues 470-532 (EEEF…DSET) and 582-613 (SALD…QMSR). Residues 476 to 480 (DSGLS) carry the Destruction motif motif. The span at 476–523 (DSGLSLDSSHSPSSLSSSEGSSSSSSSSSSSSSSASSSASSSFSEEGA) shows a compositional bias: low complexity. S528 carries the phosphoserine; by CK2 modification. Residues 598–613 (GSKEKQADFLDKQMSR) show a composition bias toward basic and acidic residues. Position 599 is a phosphoserine; by PKA (S599). Residues 654–717 (LIRDIRRRGK…RQMKQKVQSL (64 aa)) enclose the bZIP domain. A basic motif region spans residues 656–675 (RDIRRRGKNKMAAQNCRKRK). The segment at 682–696 (LERDVEDLQRDKARL) is leucine-zipper.

This sequence belongs to the bZIP family. CNC subfamily. In terms of assembly, interacts with KEAP1. As to quaternary structure, interacts (via CPD region) with FBXW7; leading to its ubiquitination and degradation. Interacts with SYVN1/HRD1; leading to its ubiquitination and degradation. Interacts (when ubiquitinated) with DDI2; leading to its cleavage. Interacts (via the bZIP domain) with small MAF protein (MAFF, MAFG or MAFK); required for binding to antioxidant response elements (AREs) on DNA. Interacts (via Destruction motif) with BTRC; leading to its ubiquitination and degradation. Interacts with CEBPB; the heterodimer represses expression of DSPP during odontoblast differentiation. Interacts with MOTS-c, a peptide produced by the mitochondrially encoded 12S rRNA MT-RNR1. Cleaved at Leu-104 by the aspartyl protease DDI2 following retrotranslocation, releasing the protein from the endoplasmic reticulum membrane and forming the transcription factor NRF1 that translocates into the nucleus. Ubiquitination is prerequisite for cleavage by aspartyl protease DDI2. In terms of processing, N-glycosylated in normal conditions, when it has a single-pass type II membrane protein topology, with the DNA-binding domain facing the endoplasmic reticulum lumen. Deglycosylated during retrotranslocation to the cytosolic side of the membrane, to have a single-pass type III membrane protein topology with the major part of the protein facing the cytosol. Post-translationally, ubiquitinated by the SCF(FBXW7) complex and SYVN1/HRD1, leading to its degradation by the proteasome. Ubiquitinated during retrotranslocation to the cytosolic side of the membrane: ubiquitination does not lead to degradation and is required for processing by the aspartyl protease DDI2 and subsequent release from the endoplasmic reticulum membrane. Phosphorylation by CK2 at Ser-528 inhibits transcription factor activity, possibly by affecting DNA-binding activity. Phosphorylation at Ser-599 is required for interaction with CEBPB. In terms of processing, ubiquitinated by the SCF(BTRC) complex in the nucleus, leading to its degradation by the proteasome.

The protein resides in the endoplasmic reticulum membrane. It is found in the nucleus. Functionally, endoplasmic reticulum membrane sensor that translocates into the nucleus in response to various stresses to act as a transcription factor. Constitutes a precursor of the transcription factor NRF1. Able to detect various cellular stresses, such as cholesterol excess, oxidative stress or proteasome inhibition. In response to stress, it is released from the endoplasmic reticulum membrane following cleavage by the protease DDI2 and translocates into the nucleus to form the transcription factor NRF1. Acts as a key sensor of cholesterol excess: in excess cholesterol conditions, the endoplasmic reticulum membrane form of the protein directly binds cholesterol via its CRAC motif, preventing cleavage and release of the transcription factor NRF1, thereby allowing expression of genes promoting cholesterol removal, such as CD36. Involved in proteasome homeostasis: in response to proteasome inhibition, it is released from the endoplasmic reticulum membrane, translocates to the nucleus and activates expression of genes encoding proteasome subunits. Its function is as follows. CNC-type bZIP family transcription factor that translocates to the nucleus and regulates expression of target genes in response to various stresses. Heterodimerizes with small-Maf proteins (MAFF, MAFG or MAFK) and binds DNA motifs including the antioxidant response elements (AREs), which regulate expression of genes involved in oxidative stress response. Activates or represses expression of target genes, depending on the context. Plays a key role in cholesterol homeostasis by acting as a sensor of cholesterol excess: in low cholesterol conditions, translocates into the nucleus and represses expression of genes involved in defense against cholesterol excess, such as CD36. In excess cholesterol conditions, the endoplasmic reticulum membrane form of the protein directly binds cholesterol via its CRAC motif, preventing cleavage and release of the transcription factor NRF1, thereby allowing expression of genes promoting cholesterol removal. Critical for redox balance in response to oxidative stress: acts by binding the AREs motifs on promoters and mediating activation of oxidative stress response genes, such as GCLC, GCLM, GSS, MT1 and MT2. Plays an essential role during fetal liver hematopoiesis: probably has a protective function against oxidative stress and is involved in lipid homeostasis in the liver. Involved in proteasome homeostasis: in response to proteasome inhibition, mediates the 'bounce-back' of proteasome subunits by translocating into the nucleus and activating expression of genes encoding proteasome subunits. Also involved in regulating glucose flux. Together with CEBPB; represses expression of DSPP during odontoblast differentiation. In response to ascorbic acid induction, activates expression of SP7/Osterix in osteoblasts. This chain is Endoplasmic reticulum membrane sensor NFE2L1 (NFE2L1), found in Homo sapiens (Human).